The following is a 347-amino-acid chain: Ion-translocating oxidoreductase complex subunit D (347 aa).

Transmembrane regions (helical) follow at residues 15-35, 36-56, 84-104, and 114-134; these read IMFLVIVACLPGIFAKYYFFG, IGTLIQIFFSIFISLVLEIII, IPPLLPWWMTSIGLFFAIVVA, and NIFNPAMVGYAVLLISFPVYM. An FMN phosphoryl threonine modification is found at T182. 5 helical membrane-spanning segments follow: residues 217–237, 239–259, 261–281, 289–309, and 315–335; these read CINISFFLGGIFLLFTKIICW, IPISFLSSLGMLSIITYFYSK, LFMSPQVHFFSGGTMICAFFI, ACNNVGKIVFGIIIGFLVWII, and YPDAIAFSVLFANMTVPLVDY.

This sequence belongs to the NqrB/RnfD family. As to quaternary structure, the complex is composed of six subunits: RnfA, RnfB, RnfC, RnfD, RnfE and RnfG. It depends on FMN as a cofactor.

The protein resides in the cell inner membrane. Functionally, part of a membrane-bound complex that couples electron transfer with translocation of ions across the membrane. The polypeptide is Ion-translocating oxidoreductase complex subunit D (Buchnera aphidicola subsp. Acyrthosiphon pisum (strain 5A)).